The following is a 115-amino-acid chain: DNA-binding protein NP_4416A (115 aa).

The span at 1–11 shows a compositional bias: acidic residues; the sequence is MSGEPTDEDLE. A disordered region spans residues 1–46; the sequence is MSGEPTDEDLEELRKKKMEQLKEQGGEGQSEAAEAQRQQAEAQKKA. Basic and acidic residues predominate over residues 12–25; the sequence is ELRKKKMEQLKEQG. Positions 29–41 are enriched in low complexity; sequence QSEAAEAQRQQAE.

It belongs to the PDCD5 family.

The protein is DNA-binding protein NP_4416A of Natronomonas pharaonis (strain ATCC 35678 / DSM 2160 / CIP 103997 / JCM 8858 / NBRC 14720 / NCIMB 2260 / Gabara) (Halobacterium pharaonis).